A 77-amino-acid chain; its full sequence is Large ribosomal subunit protein uL29 (77 aa).

Belongs to the universal ribosomal protein uL29 family.

The chain is Large ribosomal subunit protein uL29 from Methanopyrus kandleri (strain AV19 / DSM 6324 / JCM 9639 / NBRC 100938).